A 265-amino-acid polypeptide reads, in one-letter code: Flavin-dependent thymidylate synthase (265 aa).

Residues 11–224 (GFLKLIDFMG…PIAFNSFENH (214 aa)) enclose the ThyX domain. FAD-binding positions include serine 56, 79–81 (RHR), and glutamate 87. DUMP is bound at residue 76-79 (QWMR). Residues 79 to 89 (RHRTARINEVS) carry the ThyX motif motif. Arginine 155 provides a ligand contact to dUMP. Residues 171–173 (DLN) and histidine 177 contribute to the FAD site. Arginine 182 is a dUMP binding site. The Involved in ionization of N3 of dUMP, leading to its activation role is filled by arginine 182.

The protein belongs to the thymidylate synthase ThyX family. In terms of assembly, homotetramer. It depends on FAD as a cofactor.

It catalyses the reaction dUMP + (6R)-5,10-methylene-5,6,7,8-tetrahydrofolate + NADPH + H(+) = dTMP + (6S)-5,6,7,8-tetrahydrofolate + NADP(+). Its pathway is pyrimidine metabolism; dTTP biosynthesis. Catalyzes the reductive methylation of 2'-deoxyuridine-5'-monophosphate (dUMP) to 2'-deoxythymidine-5'-monophosphate (dTMP) while utilizing 5,10-methylenetetrahydrofolate (mTHF) as the methyl donor, and NADPH and FADH(2) as the reductant. The sequence is that of Flavin-dependent thymidylate synthase from Borreliella burgdorferi (strain ATCC 35210 / DSM 4680 / CIP 102532 / B31) (Borrelia burgdorferi).